The chain runs to 325 residues: Elongation factor P--(R)-beta-lysine ligase (325 aa).

76–78 (SPE) is a substrate binding site. ATP is bound by residues 100–102 (RNE) and asparagine 109. Tyrosine 118 is a substrate binding site. 244–245 (EL) serves as a coordination point for ATP. Glutamate 251 is a binding site for substrate. An ATP-binding site is contributed by glycine 300.

The protein belongs to the class-II aminoacyl-tRNA synthetase family. EpmA subfamily. In terms of assembly, homodimer.

It carries out the reaction D-beta-lysine + L-lysyl-[protein] + ATP = N(6)-((3R)-3,6-diaminohexanoyl)-L-lysyl-[protein] + AMP + diphosphate + H(+). Its function is as follows. With EpmB is involved in the beta-lysylation step of the post-translational modification of translation elongation factor P (EF-P). Catalyzes the ATP-dependent activation of (R)-beta-lysine produced by EpmB, forming a lysyl-adenylate, from which the beta-lysyl moiety is then transferred to the epsilon-amino group of a conserved specific lysine residue in EF-P. This Citrobacter koseri (strain ATCC BAA-895 / CDC 4225-83 / SGSC4696) protein is Elongation factor P--(R)-beta-lysine ligase.